The sequence spans 339 residues: Phenylalanine--tRNA ligase alpha subunit (339 aa).

Position 262 (glutamate 262) interacts with Mg(2+).

The protein belongs to the class-II aminoacyl-tRNA synthetase family. Phe-tRNA synthetase alpha subunit type 1 subfamily. In terms of assembly, tetramer of two alpha and two beta subunits. It depends on Mg(2+) as a cofactor.

It localises to the cytoplasm. It carries out the reaction tRNA(Phe) + L-phenylalanine + ATP = L-phenylalanyl-tRNA(Phe) + AMP + diphosphate + H(+). This Neisseria gonorrhoeae (strain ATCC 700825 / FA 1090) protein is Phenylalanine--tRNA ligase alpha subunit.